We begin with the raw amino-acid sequence, 678 residues long: Probable 3',5'-cyclic phosphodiesterase pde-3 (678 aa).

Disordered stretches follow at residues M1–T27, A52–G95, and T223–E250. Low complexity predominate over residues A7 to G19. Composition is skewed to polar residues over residues T60–V85 and A231–N246. Residues R281–E632 enclose the PDEase domain. Residue H356 is the Proton donor of the active site. H360, H421, D422, and D531 together coordinate a divalent metal cation. The interval E654 to Q678 is disordered.

Belongs to the cyclic nucleotide phosphodiesterase family. Requires a divalent metal cation as cofactor.

The catalysed reaction is a nucleoside 3',5'-cyclic phosphate + H2O = a nucleoside 5'-phosphate + H(+). This Caenorhabditis elegans protein is Probable 3',5'-cyclic phosphodiesterase pde-3 (pde-3).